The chain runs to 99 residues: uncharacterized protein (99 aa).

This is an uncharacterized protein from Saccharomyces cerevisiae (strain ATCC 204508 / S288c) (Baker's yeast).